Here is a 1558-residue protein sequence, read N- to C-terminus: Eukaryotic translation initiation factor 2-alpha kinase 1 (1558 aa).

Positions 429 to 789 (FFEEKILGCG…AYNLLHESVL (361 aa)) constitute a Protein kinase domain. ATP-binding positions include 435–443 (LGCGGFGYV) and Lys-458. Catalysis depends on Asp-660, which acts as the Proton acceptor. A disordered region spans residues 1014–1033 (GTSTNNNNNNNNNNMGNNNI).

Belongs to the protein kinase superfamily. Ser/Thr protein kinase family. GCN2 subfamily. In terms of processing, auto-phosphorylated.

It carries out the reaction L-seryl-[protein] + ATP = O-phospho-L-seryl-[protein] + ADP + H(+). The catalysed reaction is L-threonyl-[protein] + ATP = O-phospho-L-threonyl-[protein] + ADP + H(+). Its function is as follows. In blood stage parasites, phosphorylates translation factor eIF2alpha in response to amino acid starvation. During the asexual blood stage, involved in the response to the host hormone melatonin which is used by the parasite to modulate its cell cycle. The sequence is that of Eukaryotic translation initiation factor 2-alpha kinase 1 from Plasmodium falciparum (isolate 3D7).